Here is an 831-residue protein sequence, read N- to C-terminus: Translation initiation factor IF-2 (831 aa).

The region spanning 329 to 499 (TRAPVVTVMG…LLIAEMQDLK (171 aa)) is the tr-type G domain. The segment at 338-345 (GHVDHGKT) is G1. 338–345 (GHVDHGKT) provides a ligand contact to GTP. The tract at residues 363 to 367 (GITQH) is G2. The tract at residues 385–388 (DTPG) is G3. GTP contacts are provided by residues 385-389 (DTPGH) and 439-442 (NKID). The segment at 439 to 442 (NKID) is G4. The interval 475 to 477 (SAL) is G5.

It belongs to the TRAFAC class translation factor GTPase superfamily. Classic translation factor GTPase family. IF-2 subfamily.

It is found in the cytoplasm. In terms of biological role, one of the essential components for the initiation of protein synthesis. Protects formylmethionyl-tRNA from spontaneous hydrolysis and promotes its binding to the 30S ribosomal subunits. Also involved in the hydrolysis of GTP during the formation of the 70S ribosomal complex. This Rickettsia rickettsii (strain Iowa) protein is Translation initiation factor IF-2.